A 91-amino-acid polypeptide reads, in one-letter code: Large ribosomal subunit protein uL23 (91 aa).

It belongs to the universal ribosomal protein uL23 family. As to quaternary structure, part of the 50S ribosomal subunit. Contacts protein L29, and trigger factor when it is bound to the ribosome.

Its function is as follows. One of the early assembly proteins it binds 23S rRNA. One of the proteins that surrounds the polypeptide exit tunnel on the outside of the ribosome. Forms the main docking site for trigger factor binding to the ribosome. This Staphylococcus haemolyticus (strain JCSC1435) protein is Large ribosomal subunit protein uL23.